Reading from the N-terminus, the 363-residue chain is MDMDSAHLDSSLLTLAFRLIKAAQTAAPSVLADLLAEGAPAWFQDDDLGWSCLHYAAERKEPECLEVLLQGGAVWNAVDKWGRTAGEICLSLGDEEGWSIIRNEGIRSEDKTSAGDNLVFLKSKLTWDVGKDGKERVLDADGNGVMMGWEEPLSYCIVVEHVKRLTEEHPKAELGAEGMSILNVGFGLGIVDRLFQECDPKPSHHTIIEAHPQVLEYIHKKGVHLLPNVRILQGRWQDWLLDGEKVGDVLSGTPDGMGFDAIFVDTFAEGYEDLKAFFEVIPDILNADNGRFSFWNGLGATNPTIYAVSSSLAELHLEDVGLQVEWHDVLIPESMREEVWKGVRRRYWDLPGYRLPIAKMSLI.

ANK repeat units follow at residues 22-46 and 48-80; these read AAQT…FQDD and LGWS…AVDK. In terms of domain architecture, RMT2 spans 111 to 363; the sequence is KTSAGDNLVF…RLPIAKMSLI (253 aa). S-adenosyl-L-methionine contacts are provided by residues phenylalanine 120, 186-191, 209-211, 236-237, and aspartate 265; these read FGLGIV, EAH, and WQ.

The protein belongs to the class I-like SAM-binding methyltransferase superfamily. RMT2 methyltransferase family. As to quaternary structure, monomer.

It is found in the cytoplasm. The protein resides in the nucleus. Its function is as follows. S-adenosyl-L-methionine-dependent protein-arginine N-methyltransferase that methylates the delta-nitrogen atom of arginine residues to form N5-methylarginine (type IV) in target proteins. Monomethylates ribosomal protein L12. This chain is Protein arginine N-methyltransferase 2, found in Cryptococcus neoformans var. neoformans serotype D (strain B-3501A) (Filobasidiella neoformans).